The sequence spans 91 residues: Potassium channel toxin BuTXK-beta (91 aa).

Positions 1 to 20 (MQRNLVVLLLLGMVALSSCG) are cleaved as a signal peptide. The propeptide occupies 21-27 (LREKHFQ). The BetaSPN-type CS-alpha/beta domain maps to 54-91 (QFGCPAYQGYCDDHCQDIKKEEGFCHGMKCKCGIPMGF). 3 cysteine pairs are disulfide-bonded: C57-C78, C64-C83, and C68-C85.

This sequence belongs to the long chain scorpion toxin family. Class 1 subfamily. As to expression, expressed by the venom gland.

Its subcellular location is the secreted. Inhibits voltage-gated potassium channel. The chain is Potassium channel toxin BuTXK-beta from Buthus israelis (Israeli scorpion).